A 100-amino-acid chain; its full sequence is Urease subunit gamma (100 aa).

This sequence belongs to the urease gamma subunit family. Heterotrimer of UreA (gamma), UreB (beta) and UreC (alpha) subunits. Three heterotrimers associate to form the active enzyme.

The protein localises to the cytoplasm. It carries out the reaction urea + 2 H2O + H(+) = hydrogencarbonate + 2 NH4(+). The protein operates within nitrogen metabolism; urea degradation; CO(2) and NH(3) from urea (urease route): step 1/1. This Marinomonas sp. (strain MWYL1) protein is Urease subunit gamma.